An 82-amino-acid chain; its full sequence is U-scoloptoxin(21)-Sm3a (82 aa).

A signal peptide spans 1 to 21; sequence MKIIALLLMVFLDFIIVNXAE.

Belongs to the scoloptoxin-21 family. As to expression, expressed by the venom gland.

It localises to the secreted. In Scolopendra morsitans (Tanzanian blue ringleg centipede), this protein is U-scoloptoxin(21)-Sm3a.